Consider the following 165-residue polypeptide: Ribosome maturation factor RimM (165 aa).

The PRC barrel domain maps to 94-163; that stretch reads EDEFYIADLN…KDYVTLNYQR (70 aa).

Belongs to the RimM family. In terms of assembly, binds ribosomal protein uS19.

The protein resides in the cytoplasm. Its function is as follows. An accessory protein needed during the final step in the assembly of 30S ribosomal subunit, possibly for assembly of the head region. Essential for efficient processing of 16S rRNA. May be needed both before and after RbfA during the maturation of 16S rRNA. It has affinity for free ribosomal 30S subunits but not for 70S ribosomes. This Rickettsia akari (strain Hartford) protein is Ribosome maturation factor RimM.